We begin with the raw amino-acid sequence, 317 residues long: Probable cell division protein WhiA (317 aa).

Residues S275–E308 constitute a DNA-binding region (H-T-H motif).

The protein belongs to the WhiA family.

Functionally, involved in cell division and chromosome segregation. The sequence is that of Probable cell division protein WhiA from Desulfitobacterium hafniense (strain Y51).